A 116-amino-acid polypeptide reads, in one-letter code: Ribosome-binding factor A (116 aa).

It belongs to the RbfA family. As to quaternary structure, monomer. Binds 30S ribosomal subunits, but not 50S ribosomal subunits or 70S ribosomes.

Its subcellular location is the cytoplasm. One of several proteins that assist in the late maturation steps of the functional core of the 30S ribosomal subunit. Associates with free 30S ribosomal subunits (but not with 30S subunits that are part of 70S ribosomes or polysomes). Required for efficient processing of 16S rRNA. May interact with the 5'-terminal helix region of 16S rRNA. This chain is Ribosome-binding factor A, found in Ureaplasma parvum serovar 3 (strain ATCC 27815 / 27 / NCTC 11736).